We begin with the raw amino-acid sequence, 261 residues long: Ice-binding protein (261 aa).

The signal sequence occupies residues 1 to 20 (MSLLSIITIGLAGLGGLVNG). A glycan (N-linked (GlcNAc...) asparagine) is linked at Asn185.

The protein belongs to the ice-binding protein family. Homodimer. Dimerization is not required for the thermal hysteresis (TH) activity. Post-translationally, glycosylated. Glycosylation is not required for the thermal hysteresis (TH) activity. Glycosylation may increase stability and secretion of this protein.

It is found in the secreted. Its function is as follows. Confers freeze tolerance. Binds to the surface of ice crystals and inhibits their growth. Has low thermal hysteresis (TH) activity, which is the ability to lower the freezing point of an aqueous solution below its melting point. The TH activity of this protein is approximately 0.2 degrees Celsius at 50 uM and 0.3 degrees Celsius at 400 uM. This Leucosporidium sp. (strain AY30) (Arctic yeast) protein is Ice-binding protein.